The following is a 118-amino-acid chain: Vesicle-associated membrane protein 1 (118 aa).

A compositionally biased stretch (low complexity) spans 1–15; the sequence is MSAPAQPPAEGTEGA. The interval 1–36 is disordered; the sequence is MSAPAQPPAEGTEGAAPGGGPPGPPPNMTSNRRLQQ. At 1–96 the chain is on the cytoplasmic side; it reads MSAPAQPPAE…KRKYWWKNCK (96 aa). A v-SNARE coiled-coil homology domain is found at 33-93; the sequence is RLQQTQAQVE…AKLKRKYWWK (61 aa). Ser-63 carries the phosphoserine modification. The chain crosses the membrane as a helical; Anchor for type IV membrane protein span at residues 97-116; sequence MMIMLGAICAIIVVVIVIYF. Residues 117–118 lie on the Vesicular side of the membrane; it reads FT.

The protein belongs to the synaptobrevin family. Interacts with VAPA and VAPB. Post-translationally, (Microbial infection) Targeted and hydrolyzed by C.botulinum neurotoxin type X (BoNT/X) which hydrolyzes the 68-Arg-|-Ala-69 bond and probably inhibits neurotransmitter release. It remains unknown whether BoNT/X is ever produced, or what organisms it targets. As to expression, highly expressed in the zona incerta and rostral periolivary region of the brain. Other neuroanatomical regions show negligible expression. Expressed in the retina, expression observed in the outer segments of the photoreceptors, in the outer and inner plexiform layers, and in a subset of ganglion cells.

It localises to the cytoplasmic vesicle. The protein resides in the secretory vesicle. The protein localises to the synaptic vesicle membrane. It is found in the synapse. Its subcellular location is the synaptosome. It localises to the cytoplasmic vesicle membrane. Its function is as follows. Involved in the targeting and/or fusion of transport vesicles to their target membrane. In Mus musculus (Mouse), this protein is Vesicle-associated membrane protein 1 (Vamp1).